We begin with the raw amino-acid sequence, 145 residues long: PAGPFRIPKCRKEFQQAQHLRACQQWLHKQAMQSGSGPSWTLDDEFDFEDDMENPQGPQQRPPLLQQCCNELHQEEPLCVCPTLKGASKAVKQQVRQQLGQQGQQGPHLQHVISRIYQTATHLPKVCNIRQVSVCPFKKTMPGPS.

The tract at residues 34–62 (SGSGPSWTLDDEFDFEDDMENPQGPQQRP) is disordered. The propeptide occupies 40-54 (WTLDDEFDFEDDMEN). Residues 42–53 (LDDEFDFEDDME) are compositionally biased toward acidic residues.

This sequence belongs to the 2S seed storage albumins family. In terms of assembly, the protein consists of two chains linked by disulfide bonds.

This is a 2S seed storage protein. The sequence is that of Allergen Sin a 1 from Sinapis alba (White mustard).